Here is a 217-residue protein sequence, read N- to C-terminus: MFVARKISPNCKPGVRGKHTLPKLPYDYAALEPIICREIMELHHQKHHQTYVNNLNAAEEQLEEAKSKSDTTKLIQLAPALRFNGGGHINHTIFWQNLSPNKTQPSDDLKKAIESQWKSLEEFKKELTTLTVAVQGSGWGWLGFNKKSGKLQLAALPNQDPLEASTGLIPLFGIDVWEHAYYLQYKNVRPSYVEAIWDIANWDDISCRFQEAKKLGC.

The transit peptide at 1–17 (MFVARKISPNCKPGVRG) directs the protein to the mitochondrion. Mn(2+) is bound by residues His43, His91, Asp175, and His179.

It belongs to the iron/manganese superoxide dismutase family. As to quaternary structure, homotetramer. The cofactor is Mn(2+).

The protein resides in the mitochondrion matrix. The enzyme catalyses 2 superoxide + 2 H(+) = H2O2 + O2. Functionally, destroys superoxide anion radicals which are normally produced within the cells and which are toxic to biological systems. In Drosophila melanogaster (Fruit fly), this protein is Superoxide dismutase [Mn], mitochondrial (Sod2).